The following is a 304-amino-acid chain: Dihydroorotate dehydrogenase B (NAD(+)), catalytic subunit (304 aa).

Residues Ser21 and 45–46 (KA) contribute to the FMN site. Substrate-binding positions include Lys45 and 69–73 (NAIGL). 2 residues coordinate FMN: Asn99 and Asn127. Asn127 provides a ligand contact to substrate. Cys130 functions as the Nucleophile in the catalytic mechanism. 2 residues coordinate FMN: Lys165 and Ile191. 192–193 (NT) lines the substrate pocket. Residues Gly217, 243 to 244 (GG), and 265 to 266 (GT) contribute to the FMN site.

Belongs to the dihydroorotate dehydrogenase family. Type 1 subfamily. Heterotetramer of 2 PyrK and 2 PyrD type B subunits. It depends on FMN as a cofactor.

The protein localises to the cytoplasm. It carries out the reaction (S)-dihydroorotate + NAD(+) = orotate + NADH + H(+). It functions in the pathway pyrimidine metabolism; UMP biosynthesis via de novo pathway; orotate from (S)-dihydroorotate (NAD(+) route): step 1/1. Functionally, catalyzes the conversion of dihydroorotate to orotate with NAD(+) as electron acceptor. In Listeria monocytogenes serotype 4a (strain HCC23), this protein is Dihydroorotate dehydrogenase B (NAD(+)), catalytic subunit (pyrD).